Here is a 339-residue protein sequence, read N- to C-terminus: D-erythrose-4-phosphate dehydrogenase (339 aa).

11 to 12 (RI) is a binding site for NAD(+). Substrate-binding positions include 153 to 155 (SCT), R199, 212 to 213 (TK), and R235. C154 serves as the catalytic Nucleophile. N317 contacts NAD(+).

It belongs to the glyceraldehyde-3-phosphate dehydrogenase family. Epd subfamily. As to quaternary structure, homotetramer.

The protein localises to the cytoplasm. The enzyme catalyses D-erythrose 4-phosphate + NAD(+) + H2O = 4-phospho-D-erythronate + NADH + 2 H(+). It functions in the pathway cofactor biosynthesis; pyridoxine 5'-phosphate biosynthesis; pyridoxine 5'-phosphate from D-erythrose 4-phosphate: step 1/5. In terms of biological role, catalyzes the NAD-dependent conversion of D-erythrose 4-phosphate to 4-phosphoerythronate. The sequence is that of D-erythrose-4-phosphate dehydrogenase from Shewanella halifaxensis (strain HAW-EB4).